Here is a 356-residue protein sequence, read N- to C-terminus: MSRFWSPLVHKLTPYVPGEQPKMTDLIKLNTNESPYGPSPRALEAIRAADNDTLRLYPDPEALALRKALGARIGLGPEYVFVGNGSDEVLAHAFQAFFAHGEPLLFPDVTYSFYKVYCGLYSLPFRNVPLTDDMQVNVADYAGPCSGVVVANPNAPTGIALDLADVRKLLELQPNRVVLIDEAYVDFGAESAVSLIKEYPNLLVVQTFSKSRALAGLRVGFAFGQPELIEGLVRIKDSFNSYPLDRLAQVGATAAVEDEAWLATSVQKVMASRTVLTEGLQKLGFDVLPSKANFVYTRHPNRNAAELATQLRERAIIVRHLRGERTAAWLRITVGTDQQCETLLSALRDILCSNSL.

Residue lysine 210 is modified to N6-(pyridoxal phosphate)lysine.

It belongs to the class-II pyridoxal-phosphate-dependent aminotransferase family. Histidinol-phosphate aminotransferase subfamily. As to quaternary structure, homodimer. Pyridoxal 5'-phosphate is required as a cofactor.

It carries out the reaction L-histidinol phosphate + 2-oxoglutarate = 3-(imidazol-4-yl)-2-oxopropyl phosphate + L-glutamate. Its pathway is amino-acid biosynthesis; L-histidine biosynthesis; L-histidine from 5-phospho-alpha-D-ribose 1-diphosphate: step 7/9. The protein is Histidinol-phosphate aminotransferase (hisC) of Acetobacter pasteurianus (Acetobacter turbidans).